Consider the following 435-residue polypeptide: Hydrogenobyrinate a,c-diamide synthase (435 aa).

The 189-residue stretch at 247-435 (RIALARDAAF…TGSFFHLIAG (189 aa)) folds into the GATase cobBQ-type domain. Cys-329 (nucleophile) is an active-site residue.

Belongs to the CobB/CbiA family. Mg(2+) serves as cofactor.

It carries out the reaction hydrogenobyrinate + 2 L-glutamine + 2 ATP + 2 H2O = hydrogenobyrinate a,c-diamide + 2 L-glutamate + 2 ADP + 2 phosphate + 2 H(+). The protein operates within cofactor biosynthesis; adenosylcobalamin biosynthesis; cob(II)yrinate a,c-diamide from precorrin-2 (aerobic route): step 9/10. Its function is as follows. Catalyzes the ATP-dependent amidation of the two carboxylate groups at positions a and c of hydrogenobyrinate, using either L-glutamine or ammonia as the nitrogen source. The polypeptide is Hydrogenobyrinate a,c-diamide synthase (Rhodobacter capsulatus (strain ATCC BAA-309 / NBRC 16581 / SB1003)).